The following is a 156-amino-acid chain: Endoribonuclease YbeY (156 aa).

Positions 117, 121, and 127 each coordinate Zn(2+).

It belongs to the endoribonuclease YbeY family. Zn(2+) is required as a cofactor.

The protein localises to the cytoplasm. Functionally, single strand-specific metallo-endoribonuclease involved in late-stage 70S ribosome quality control and in maturation of the 3' terminus of the 16S rRNA. This is Endoribonuclease YbeY from Shewanella piezotolerans (strain WP3 / JCM 13877).